The chain runs to 329 residues: NAC domain-containing protein 79 (329 aa).

Residues 17–167 enclose the NAC domain; sequence LPPGFRFHPT…EWVICRVFHK (151 aa). The DNA-binding element occupies 114-173; that stretch reads VGMKKTLVFYRGRAPKGQKTNWVMHEYRLDGKLSAHNLPKTAKNEWVICRVFHKTAGGKK.

In terms of tissue distribution, expressed at low levels in leaves.

The protein resides in the nucleus. This is NAC domain-containing protein 79 from Arabidopsis thaliana (Mouse-ear cress).